We begin with the raw amino-acid sequence, 457 residues long: RuvB-like helicase 1 (457 aa).

Residue 72–79 coordinates ATP; it reads GAPGTGKT.

This sequence belongs to the RuvB family. As to quaternary structure, may form heterododecamers with RVB2. Component of the SWR1 chromatin remodeling complex, the INO80 chromatin remodeling complex, and of the R2TP complex.

It is found in the nucleus. The enzyme catalyses ATP + H2O = ADP + phosphate + H(+). DNA helicase which participates in several chromatin remodeling complexes, including the SWR1 and the INO80 complexes. The SWR1 complex mediates the ATP-dependent exchange of histone H2A for the H2A variant HZT1 leading to transcriptional regulation of selected genes by chromatin remodeling. The INO80 complex remodels chromatin by shifting nucleosomes and is involved in DNA repair. Also involved in pre-rRNA processing. The polypeptide is RuvB-like helicase 1 (RBV1) (Debaryomyces hansenii (strain ATCC 36239 / CBS 767 / BCRC 21394 / JCM 1990 / NBRC 0083 / IGC 2968) (Yeast)).